The primary structure comprises 594 residues: MFRDKYCAEVKEEEIGKEISLCGWVFRRRDHGGLIFIDLRDRTGIIQVVFSPEISIEMHQKAHGLRSEYVIAVKGILKKRPEGTENPELITGNVELWAKELEILSFSKPLPFQLDEMAEVSELLRLKYRYLDLRRAEMQKNFLLRHRITMAVRNFLDSKGFVEVETPMLTKSTPEGARDFLVPSRLNPGTFYALPQSPQLFKQILMMSGFDRYFQIVRCFRDEDLRADRQPEFTQIDFEMSFVKPEDIIEIVEEMLFKCFKEVLEVDIEIPFKRLTYEEAINKYGSDKPDLRFALEIQDVSELVKNSQFKVFLDTIEKGGVVKAICGKGLASLSRSEIDKLTALAQSFGAKGLAWIKVKNGFESPIVKFFSESLLREIAEKVGVEDGDMILFVADKKSLANEVLGRLRLEIAERAQIKKEGFYFAWVLDFPLFEWDEEEKRFVSMHHPFTSPKDEDIDKLLKIPQEAFYDPQSSVKDIKAKAYDIVLNGYELGGGSIRIHKADIQEHIFRILAISEEEIKRRFGFFVEALRYGAPPHGGIALGLDRLVMVMTGANSLRDVIAFPKTQKAFCPLSEAPSEVNLKQLRELHIKLDI.

Glu175 is an L-aspartate binding site. Residues 199–202 are aspartate; it reads QLFK. Residue Arg221 coordinates L-aspartate. Residues 221–223 and Gln230 contribute to the ATP site; that span reads RDE. His446 lines the L-aspartate pocket. Residue Glu491 coordinates ATP. Residue Arg498 participates in L-aspartate binding. 543-546 is an ATP binding site; sequence GLDR.

It belongs to the class-II aminoacyl-tRNA synthetase family. Type 1 subfamily. As to quaternary structure, homodimer.

The protein localises to the cytoplasm. The catalysed reaction is tRNA(Asx) + L-aspartate + ATP = L-aspartyl-tRNA(Asx) + AMP + diphosphate. Functionally, aspartyl-tRNA synthetase with relaxed tRNA specificity since it is able to aspartylate not only its cognate tRNA(Asp) but also tRNA(Asn). Reaction proceeds in two steps: L-aspartate is first activated by ATP to form Asp-AMP and then transferred to the acceptor end of tRNA(Asp/Asn). The polypeptide is Aspartate--tRNA(Asp/Asn) ligase (Thermodesulfovibrio yellowstonii (strain ATCC 51303 / DSM 11347 / YP87)).